A 61-amino-acid polypeptide reads, in one-letter code: Small ribosomal subunit protein uS14B (61 aa).

Zn(2+) contacts are provided by Cys-24, Cys-27, Cys-40, and Cys-43.

This sequence belongs to the universal ribosomal protein uS14 family. Zinc-binding uS14 subfamily. As to quaternary structure, part of the 30S ribosomal subunit. Contacts proteins S3 and S10. It depends on Zn(2+) as a cofactor.

Its function is as follows. Binds 16S rRNA, required for the assembly of 30S particles and may also be responsible for determining the conformation of the 16S rRNA at the A site. The sequence is that of Small ribosomal subunit protein uS14B from Ligilactobacillus salivarius (strain UCC118) (Lactobacillus salivarius).